Reading from the N-terminus, the 254-residue chain is Ribosomal RNA large subunit methyltransferase E (254 aa).

Residues 1–28 form a disordered region; sequence MTTPPRGPDGRPLKVRVKKSRGRTTSSQ. Positions 13–22 are enriched in basic residues; the sequence is LKVRVKKSRG. S-adenosyl-L-methionine contacts are provided by G80, W82, D103, D119, and D143. K183 serves as the catalytic Proton acceptor. Positions 231–254 are disordered; that stretch reads DRAETDDAGTDGTGTAEAQAPRDQ.

This sequence belongs to the class I-like SAM-binding methyltransferase superfamily. RNA methyltransferase RlmE family.

It is found in the cytoplasm. The catalysed reaction is uridine(2552) in 23S rRNA + S-adenosyl-L-methionine = 2'-O-methyluridine(2552) in 23S rRNA + S-adenosyl-L-homocysteine + H(+). Its function is as follows. Specifically methylates the uridine in position 2552 of 23S rRNA at the 2'-O position of the ribose in the fully assembled 50S ribosomal subunit. This Xanthobacter autotrophicus (strain ATCC BAA-1158 / Py2) protein is Ribosomal RNA large subunit methyltransferase E.